The primary structure comprises 309 residues: Protein FdhE (309 aa).

Belongs to the FdhE family.

The protein localises to the cytoplasm. In terms of biological role, necessary for formate dehydrogenase activity. This is Protein FdhE from Shigella boydii serotype 18 (strain CDC 3083-94 / BS512).